A 264-amino-acid chain; its full sequence is Thymidylate synthase (264 aa).

Position 21 (arginine 21) interacts with dUMP. Position 51 (histidine 51) interacts with (6R)-5,10-methylene-5,6,7,8-tetrahydrofolate. 126–127 (RR) serves as a coordination point for dUMP. Cysteine 146 functions as the Nucleophile in the catalytic mechanism. Residues 166–169 (RSCD), asparagine 177, and 207–209 (HLY) each bind dUMP. Aspartate 169 provides a ligand contact to (6R)-5,10-methylene-5,6,7,8-tetrahydrofolate. Residue alanine 263 participates in (6R)-5,10-methylene-5,6,7,8-tetrahydrofolate binding.

Belongs to the thymidylate synthase family. Bacterial-type ThyA subfamily. In terms of assembly, homodimer.

It is found in the cytoplasm. It catalyses the reaction dUMP + (6R)-5,10-methylene-5,6,7,8-tetrahydrofolate = 7,8-dihydrofolate + dTMP. It participates in pyrimidine metabolism; dTTP biosynthesis. Catalyzes the reductive methylation of 2'-deoxyuridine-5'-monophosphate (dUMP) to 2'-deoxythymidine-5'-monophosphate (dTMP) while utilizing 5,10-methylenetetrahydrofolate (mTHF) as the methyl donor and reductant in the reaction, yielding dihydrofolate (DHF) as a by-product. This enzymatic reaction provides an intracellular de novo source of dTMP, an essential precursor for DNA biosynthesis. In Escherichia coli (strain 55989 / EAEC), this protein is Thymidylate synthase.